The sequence spans 87 residues: Apolipoprotein C-I (87 aa).

The first 26 residues, 1–26 (MRLILSLPVLAVVLAMVLEGPAPAQA), serve as a signal peptide directing secretion.

This sequence belongs to the apolipoprotein C1 family.

It is found in the secreted. Its function is as follows. Inhibitor of lipoprotein binding to the low density lipoprotein (LDL) receptor, LDL receptor-related protein, and very low density lipoprotein (VLDL) receptor. Associates with high density lipoproteins (HDL) and the triacylglycerol-rich lipoproteins in the plasma and makes up about 10% of the protein of the VLDL and 2% of that of HDL. Appears to interfere directly with fatty acid uptake and is also the major plasma inhibitor of cholesteryl ester transfer protein (CETP). Binds free fatty acids and reduces their intracellular esterification. Modulates the interaction of APOE with beta-migrating VLDL and inhibits binding of beta-VLDL to the LDL receptor-related protein. This Pteropus vampyrus (Large flying fox) protein is Apolipoprotein C-I (APOC1).